The sequence spans 327 residues: DNA-directed RNA polymerase subunit alpha (327 aa).

An alpha N-terminal domain (alpha-NTD) region spans residues 1 to 242 (MRKFLKYQLD…AHLEPIVNID (242 aa)). The interval 259–327 (KRQNASISID…TERSLELKKD (69 aa)) is alpha C-terminal domain (alpha-CTD).

This sequence belongs to the RNA polymerase alpha chain family. As to quaternary structure, homodimer. The RNAP catalytic core consists of 2 alpha, 1 beta, 1 beta' and 1 omega subunit. When a sigma factor is associated with the core the holoenzyme is formed, which can initiate transcription.

The enzyme catalyses RNA(n) + a ribonucleoside 5'-triphosphate = RNA(n+1) + diphosphate. Functionally, DNA-dependent RNA polymerase catalyzes the transcription of DNA into RNA using the four ribonucleoside triphosphates as substrates. In Ureaplasma parvum serovar 3 (strain ATCC 700970), this protein is DNA-directed RNA polymerase subunit alpha.